Consider the following 34-residue polypeptide: Conotoxin Cl6d (34 aa).

3 cysteine pairs are disulfide-bonded: C4/C19, C12/C29, and C18/C33. 4-hydroxyproline occurs at positions 14 and 21.

In terms of tissue distribution, expressed by the venom duct.

It is found in the secreted. The sequence is that of Conotoxin Cl6d from Californiconus californicus (California cone).